Here is a 122-residue protein sequence, read N- to C-terminus: Ribonuclease P protein component (122 aa).

The protein belongs to the RnpA family. In terms of assembly, consists of a catalytic RNA component (M1 or rnpB) and a protein subunit.

It catalyses the reaction Endonucleolytic cleavage of RNA, removing 5'-extranucleotides from tRNA precursor.. Its function is as follows. RNaseP catalyzes the removal of the 5'-leader sequence from pre-tRNA to produce the mature 5'-terminus. It can also cleave other RNA substrates such as 4.5S RNA. The protein component plays an auxiliary but essential role in vivo by binding to the 5'-leader sequence and broadening the substrate specificity of the ribozyme. This is Ribonuclease P protein component from Shouchella clausii (strain KSM-K16) (Alkalihalobacillus clausii).